The sequence spans 588 residues: Proline--tRNA ligase (588 aa).

It belongs to the class-II aminoacyl-tRNA synthetase family. ProS type 1 subfamily. As to quaternary structure, homodimer.

It is found in the cytoplasm. It catalyses the reaction tRNA(Pro) + L-proline + ATP = L-prolyl-tRNA(Pro) + AMP + diphosphate. Functionally, catalyzes the attachment of proline to tRNA(Pro) in a two-step reaction: proline is first activated by ATP to form Pro-AMP and then transferred to the acceptor end of tRNA(Pro). As ProRS can inadvertently accommodate and process non-cognate amino acids such as alanine and cysteine, to avoid such errors it has two additional distinct editing activities against alanine. One activity is designated as 'pretransfer' editing and involves the tRNA(Pro)-independent hydrolysis of activated Ala-AMP. The other activity is designated 'posttransfer' editing and involves deacylation of mischarged Ala-tRNA(Pro). The misacylated Cys-tRNA(Pro) is not edited by ProRS. This chain is Proline--tRNA ligase, found in Corynebacterium glutamicum (strain ATCC 13032 / DSM 20300 / JCM 1318 / BCRC 11384 / CCUG 27702 / LMG 3730 / NBRC 12168 / NCIMB 10025 / NRRL B-2784 / 534).